A 45-amino-acid polypeptide reads, in one-letter code: uncharacterized protein (45 aa).

The protein belongs to the asfivirus C62L family.

This is an uncharacterized protein from Ornithodoros (relapsing fever ticks).